Reading from the N-terminus, the 189-residue chain is Fine tangled pili major subunit (189 aa).

Belongs to the Dps family. As to quaternary structure, hexamer.

The protein localises to the fimbrium. May contribute to bacterial adherence, or be involved in the protection of the bacteria, or both. This chain is Fine tangled pili major subunit (ftpA), found in Haemophilus ducreyi (strain 35000HP / ATCC 700724).